The sequence spans 302 residues: ATP synthase gamma chain (302 aa).

The protein belongs to the ATPase gamma chain family. In terms of assembly, F-type ATPases have 2 components, CF(1) - the catalytic core - and CF(0) - the membrane proton channel. CF(1) has five subunits: alpha(3), beta(3), gamma(1), delta(1), epsilon(1). CF(0) has three main subunits: a, b and c.

The protein resides in the cell inner membrane. Functionally, produces ATP from ADP in the presence of a proton gradient across the membrane. The gamma chain is believed to be important in regulating ATPase activity and the flow of protons through the CF(0) complex. In Bartonella bacilliformis (strain ATCC 35685 / KC583 / Herrer 020/F12,63), this protein is ATP synthase gamma chain.